Consider the following 853-residue polypeptide: DNA mismatch repair protein MutS (853 aa).

614-621 (GPNMGGKS) serves as a coordination point for ATP.

The protein belongs to the DNA mismatch repair MutS family.

In terms of biological role, this protein is involved in the repair of mismatches in DNA. It is possible that it carries out the mismatch recognition step. This protein has a weak ATPase activity. The polypeptide is DNA mismatch repair protein MutS (Shigella dysenteriae serotype 1 (strain Sd197)).